The primary structure comprises 242 residues: Dihydropteridine reductase (242 aa).

12 to 36 (LVYGGRGALGSRCVQAFRARNWWVA) contacts NADP(+). An N6-succinyllysine mark is found at Lys-71, Lys-77, Lys-94, and Lys-100. The Proton acceptor role is filled by Tyr-148.

The protein belongs to the short-chain dehydrogenases/reductases (SDR) family. As to quaternary structure, homodimer.

It catalyses the reaction 5,6,7,8-tetrahydropteridine + NAD(+) = 6,7-dihydropteridine + NADH + H(+). The catalysed reaction is 5,6,7,8-tetrahydropteridine + NADP(+) = 6,7-dihydropteridine + NADPH + H(+). Its function is as follows. Catalyzes the conversion of quinonoid dihydrobiopterin into tetrahydrobiopterin. The polypeptide is Dihydropteridine reductase (QDPR) (Bos taurus (Bovine)).